A 449-amino-acid chain; its full sequence is D-inositol 3-phosphate glycosyltransferase (449 aa).

Histidine 43 lines the 1D-myo-inositol 3-phosphate pocket. Residues 49-50 (QP) and glycine 57 each bind UDP-N-acetyl-alpha-D-glucosamine. 1D-myo-inositol 3-phosphate contacts are provided by residues 54–59 (DAGGMN), lysine 112, tyrosine 145, threonine 169, and arginine 189. Residues arginine 263, lysine 268, and glutamine 324 each contribute to the UDP-N-acetyl-alpha-D-glucosamine site. Mg(2+)-binding residues include tyrosine 333, arginine 334, and alanine 336. UDP-N-acetyl-alpha-D-glucosamine is bound by residues glutamate 346 and glutamate 354. Residue threonine 360 coordinates Mg(2+).

It belongs to the glycosyltransferase group 1 family. MshA subfamily. In terms of assembly, homodimer.

It carries out the reaction 1D-myo-inositol 3-phosphate + UDP-N-acetyl-alpha-D-glucosamine = 1D-myo-inositol 2-acetamido-2-deoxy-alpha-D-glucopyranoside 3-phosphate + UDP + H(+). Functionally, catalyzes the transfer of a N-acetyl-glucosamine moiety to 1D-myo-inositol 3-phosphate to produce 1D-myo-inositol 2-acetamido-2-deoxy-glucopyranoside 3-phosphate in the mycothiol biosynthesis pathway. The chain is D-inositol 3-phosphate glycosyltransferase from Segniliparus rotundus (strain ATCC BAA-972 / CDC 1076 / CIP 108378 / DSM 44985 / JCM 13578).